The primary structure comprises 375 residues: Probable RNA 3'-terminal phosphate cyclase-like protein (375 aa).

It belongs to the RNA 3'-terminal cyclase family. Type 2 subfamily.

The protein localises to the nucleus. It is found in the nucleolus. Functionally, does not have cyclase activity. Plays a role in 40S-ribosomal-subunit biogenesis in the early pre-rRNA processing steps at sites A0, A1 and A2 that are required for proper maturation of the 18S RNA. The protein is Probable RNA 3'-terminal phosphate cyclase-like protein of Arabidopsis thaliana (Mouse-ear cress).